We begin with the raw amino-acid sequence, 202 residues long: Holliday junction branch migration complex subunit RuvA (202 aa).

Positions 1 to 64 are domain I; it reads MIGRLRGSLA…EDAHLLYGFY (64 aa). The domain II stretch occupies residues 65 to 143; that stretch reads EKRERELFRE…AWEALPGTFT (79 aa). The tract at residues 144–153 is flexible linker; that stretch reads LVSNGPNQAE. The domain III stretch occupies residues 154 to 202; it reads PVASAESDAVSALISLGYKPQEASKAVSAIKEKDLSSADLIRRALKGMG.

It belongs to the RuvA family. Homotetramer. Forms an RuvA(8)-RuvB(12)-Holliday junction (HJ) complex. HJ DNA is sandwiched between 2 RuvA tetramers; dsDNA enters through RuvA and exits via RuvB. An RuvB hexamer assembles on each DNA strand where it exits the tetramer. Each RuvB hexamer is contacted by two RuvA subunits (via domain III) on 2 adjacent RuvB subunits; this complex drives branch migration. In the full resolvosome a probable DNA-RuvA(4)-RuvB(12)-RuvC(2) complex forms which resolves the HJ.

The protein resides in the cytoplasm. The RuvA-RuvB-RuvC complex processes Holliday junction (HJ) DNA during genetic recombination and DNA repair, while the RuvA-RuvB complex plays an important role in the rescue of blocked DNA replication forks via replication fork reversal (RFR). RuvA specifically binds to HJ cruciform DNA, conferring on it an open structure. The RuvB hexamer acts as an ATP-dependent pump, pulling dsDNA into and through the RuvAB complex. HJ branch migration allows RuvC to scan DNA until it finds its consensus sequence, where it cleaves and resolves the cruciform DNA. In Pseudomonas syringae pv. syringae (strain B728a), this protein is Holliday junction branch migration complex subunit RuvA.